The sequence spans 546 residues: Major facilitator superfamily transporter MPN_077 (546 aa).

12 helical membrane passes run 2–22 (WGLVLLGYVLFVIEWFVIDFI), 62–82 (WTITLLRAVGSILCGVMVVKF), 88–108 (VMIMMGLMCVCFPFLIIGSPL), 179–199 (AFFIIFRSTIAIGGTTLIAYA), 220–240 (FWGFNVGLVIVAAPFLIPGVG), 248–268 (VWVVTFMILLVFAMLLVFAWF), 305–325 (LLAIAGVGTILLINPLTQTWF), 344–364 (PILLILWVMGYLLGYFLLSPF), 377–397 (FIFTANAVLVLLIVIFAATLG), 401–421 (VVGFTFVGIFTFIAGGFGWSL), 442–462 (IIFGYVWGFAYVFYSIFDIIT), and 485–505 (IAAIVLFVSLLLVINWVIIYL).

It belongs to the major facilitator superfamily.

The protein resides in the cell membrane. This Mycoplasma pneumoniae (strain ATCC 29342 / M129 / Subtype 1) (Mycoplasmoides pneumoniae) protein is Major facilitator superfamily transporter MPN_077.